Reading from the N-terminus, the 407-residue chain is Argininosuccinate synthase (407 aa).

Residues 13–21 (AYSGGLDTS) and Ala40 each bind ATP. L-citrulline is bound by residues Tyr91 and Ser96. Position 121 (Gly121) interacts with ATP. Residues Thr123, Asn127, and Asp128 each coordinate L-aspartate. An L-citrulline-binding site is contributed by Asn127. Positions 131, 182, 191, 267, and 279 each coordinate L-citrulline.

Belongs to the argininosuccinate synthase family. Type 1 subfamily. Homotetramer.

Its subcellular location is the cytoplasm. It carries out the reaction L-citrulline + L-aspartate + ATP = 2-(N(omega)-L-arginino)succinate + AMP + diphosphate + H(+). The protein operates within amino-acid biosynthesis; L-arginine biosynthesis; L-arginine from L-ornithine and carbamoyl phosphate: step 2/3. This chain is Argininosuccinate synthase, found in Agrobacterium fabrum (strain C58 / ATCC 33970) (Agrobacterium tumefaciens (strain C58)).